Reading from the N-terminus, the 150-residue chain is Large ribosomal subunit protein bL9 (150 aa).

Belongs to the bacterial ribosomal protein bL9 family.

In terms of biological role, binds to the 23S rRNA. The protein is Large ribosomal subunit protein bL9 of Saccharopolyspora erythraea (strain ATCC 11635 / DSM 40517 / JCM 4748 / NBRC 13426 / NCIMB 8594 / NRRL 2338).